The sequence spans 209 residues: Methylated-DNA--protein-cysteine methyltransferase (209 aa).

Zn(2+) is bound at residue Cys-5. Phosphoserine is present on Ser-14. Residues Cys-24 and His-29 each contribute to the Zn(2+) site. The tract at residues 35 to 57 (SGKTPSSDPKEAPASPELLGGPE) is disordered. Residue His-89 coordinates Zn(2+). Residues Thr-99, Tyr-118, Gln-119, Asn-127, and Arg-132 each contribute to the DNA site. Cys-149 acts as the Nucleophile; methyl group acceptor in catalysis. Ser-155 lines the DNA pocket. Position 205 is a phosphoserine (Ser-205).

The protein belongs to the MGMT family. Zn(2+) serves as cofactor.

Its subcellular location is the nucleus. It catalyses the reaction a 6-O-methyl-2'-deoxyguanosine in DNA + L-cysteinyl-[protein] = S-methyl-L-cysteinyl-[protein] + a 2'-deoxyguanosine in DNA. It carries out the reaction a 4-O-methyl-thymidine in DNA + L-cysteinyl-[protein] = a thymidine in DNA + S-methyl-L-cysteinyl-[protein]. Its function is as follows. Involved in the cellular defense against the biological effects of O6-methylguanine (O6-MeG) and O4-methylthymine (O4-MeT) in DNA. Repairs the methylated nucleobase in DNA by stoichiometrically transferring the methyl group to a cysteine residue in the enzyme. This is a suicide reaction: the enzyme is irreversibly inactivated. This chain is Methylated-DNA--protein-cysteine methyltransferase (MGMT), found in Cricetulus griseus (Chinese hamster).